Consider the following 105-residue polypeptide: Small ribosomal subunit protein uS10 (105 aa).

Belongs to the universal ribosomal protein uS10 family. As to quaternary structure, part of the 30S ribosomal subunit.

Functionally, involved in the binding of tRNA to the ribosomes. The protein is Small ribosomal subunit protein uS10 of Legionella pneumophila (strain Paris).